The following is a 372-amino-acid chain: N-methyl-L-tryptophan oxidase (372 aa).

FAD is bound at residue 4 to 34 (DLIIIGSGSVGAAAGYYATRAGLNVLMTDAH). C308 carries the S-8alpha-FAD cysteine modification.

Belongs to the MSOX/MTOX family. MTOX subfamily. As to quaternary structure, monomer. FAD is required as a cofactor.

The enzyme catalyses N(alpha)-methyl-L-tryptophan + O2 + H2O = L-tryptophan + formaldehyde + H2O2. Its function is as follows. Catalyzes the oxidative demethylation of N-methyl-L-tryptophan. This is N-methyl-L-tryptophan oxidase from Escherichia coli O139:H28 (strain E24377A / ETEC).